A 795-amino-acid polypeptide reads, in one-letter code: Phenylalanine--tRNA ligase beta subunit (795 aa).

A tRNA-binding domain is found at lysine 39–tyrosine 148. The B5 domain maps to histidine 400 to leucine 475. The Mg(2+) site is built by aspartate 453, aspartate 459, and aspartate 463. In terms of domain architecture, FDX-ACB spans serine 701–arginine 794.

The protein belongs to the phenylalanyl-tRNA synthetase beta subunit family. Type 1 subfamily. In terms of assembly, tetramer of two alpha and two beta subunits. Mg(2+) serves as cofactor.

The protein localises to the cytoplasm. The enzyme catalyses tRNA(Phe) + L-phenylalanine + ATP = L-phenylalanyl-tRNA(Phe) + AMP + diphosphate + H(+). The polypeptide is Phenylalanine--tRNA ligase beta subunit (pheT) (Buchnera aphidicola subsp. Acyrthosiphon pisum (strain APS) (Acyrthosiphon pisum symbiotic bacterium)).